The primary structure comprises 81 residues: MKVLILIIASVLLIGVECKDGFPVDSEGCILLPCATRAYCSVNCKFMKGSGGSCDTLACHCKGLPEDAKVQDKPTNKCGRK.

An N-terminal signal peptide occupies residues 1–18; the sequence is MKVLILIIASVLLIGVEC. The region spanning 19–78 is the LCN-type CS-alpha/beta domain; sequence KDGFPVDSEGCILLPCATRAYCSVNCKFMKGSGGSCDTLACHCKGLPEDAKVQDKPTNKC. 4 disulfide bridges follow: C29/C78, C34/C54, C40/C59, and C44/C61. C78 is modified (cysteine amide).

This sequence belongs to the long (4 C-C) scorpion toxin superfamily. Sodium channel inhibitor family. Beta subfamily. As to expression, expressed by the venom gland.

It is found in the secreted. Beta toxins bind voltage-independently at site-4 of sodium channels (Nav) and shift the voltage of activation toward more negative potentials thereby affecting sodium channel activation and promoting spontaneous and repetitive firing. The protein is Beta-toxin Ct13 of Centruroides tecomanus (Scorpion).